The following is a 406-amino-acid chain: Tryptophan 2,3-dioxygenase (406 aa).

Residues 72 to 76 and R144 each bind substrate; that span reads FIVTH. A heme-binding site is contributed by H328. Residue T342 participates in substrate binding.

This sequence belongs to the tryptophan 2,3-dioxygenase family. Homotetramer. Dimer of dimers. Heme is required as a cofactor.

It carries out the reaction L-tryptophan + O2 = N-formyl-L-kynurenine. It participates in amino-acid degradation; L-tryptophan degradation via kynurenine pathway; L-kynurenine from L-tryptophan: step 1/2. Heme-dependent dioxygenase that catalyzes the oxidative cleavage of the L-tryptophan (L-Trp) pyrrole ring and converts L-tryptophan to N-formyl-L-kynurenine. Catalyzes the oxidative cleavage of the indole moiety. The sequence is that of Tryptophan 2,3-dioxygenase from Xenopus tropicalis (Western clawed frog).